A 371-amino-acid chain; its full sequence is MSAVEKLPEDFCANPDVAWTFPKVFYTSSQVFEHEKEAIFAKSWICVAHSSELAQPNDYITRKVIGENIVIIRGKDSVLRAFYNVCPHRGHELLSGSGKAKNVITCPYHAWTFKLDGSLALARNCDHVESFDKENSSMVPLKVEEYAGFLFINMDENATCVEDQLPGFAERLNQACGVIKDLKLAARFVTETPANWKVIVDNYMECYHCGPAHPGFADSVQVDKYWHTTHQNWTLQYGFARSSEKSFKLDPSVTDPEFHGFWTWPCTMFNVPPGSNFMTVIYEFPVDAETTLQHYDIYFTNEELTQDQKDLIEWYRNVFRPEDLNLVESVQRGLKSRGYRGQGRIMTDKQRSGISEHGIAYFQHLVAQYHQ.

One can recognise a Rieske domain in the interval 44–152; that stretch reads WICVAHSSEL…VEEYAGFLFI (109 aa). Residues cysteine 86, histidine 88, cysteine 106, and histidine 109 each contribute to the [2Fe-2S] cluster site. Fe cation contacts are provided by histidine 208, histidine 213, and aspartate 323.

Belongs to the bacterial ring-hydroxylating dioxygenase alpha subunit family. CntA subfamily. In terms of assembly, composed of an oxygenase subunit (cntA) and a reductase subunit (cntB). It depends on [2Fe-2S] cluster as a cofactor. Fe cation serves as cofactor.

The enzyme catalyses (R)-carnitine + NADH + O2 + H(+) = (3R)-3-hydroxy-4-oxobutanoate + trimethylamine + NAD(+) + H2O. It catalyses the reaction (R)-carnitine + NADPH + O2 + H(+) = (3R)-3-hydroxy-4-oxobutanoate + trimethylamine + NADP(+) + H2O. It participates in amine and polyamine metabolism; carnitine metabolism. Functionally, converts carnitine to trimethylamine and malic semialdehyde. This chain is Carnitine monooxygenase oxygenase subunit, found in Acinetobacter baumannii (strain ATCC 19606 / DSM 30007 / JCM 6841 / CCUG 19606 / CIP 70.34 / NBRC 109757 / NCIMB 12457 / NCTC 12156 / 81).